We begin with the raw amino-acid sequence, 72 residues long: Antimicrobial peptide MeuNaTxbeta-4 (72 aa).

Positions 1–5 (LIGVK) are cleaved as a signal peptide. The region spanning 7-69 (EHGYLLDKYT…LWHYETNKCN (63 aa)) is the LCN-type CS-alpha/beta domain. Cystine bridges form between Cys-18–Cys-68, Cys-22–Cys-43, Cys-29–Cys-50, and Cys-33–Cys-52.

As to expression, expressed by the venom gland.

It is found in the secreted. Antimicrobial peptide with weak activity against both Gram-positive and -negative bacteria. Its antibiotic activity is potentiated by other antibacterial peptides such as Meucin-49. This Mesobuthus eupeus (Lesser Asian scorpion) protein is Antimicrobial peptide MeuNaTxbeta-4.